The primary structure comprises 331 residues: Flotillin-like protein FloA (331 aa).

2 consecutive transmembrane segments (helical) span residues 6 to 26 (LMIL…FTFV) and 28 to 48 (VMLW…TLVG). Residues 236-331 (QTDQAEADKN…KDPSDEDRKS (96 aa)) are required for correct localization. 4 consecutive short sequence motifs (EA repeat) follow at residues 240–242 (AEA), 251–253 (AEE), 278–282 (EAEAE), and 288–290 (AEA). Positions 312 to 331 (EMRDSFGKLTKDPSDEDRKS) are disordered.

The protein belongs to the flotillin-like FloA family. In terms of assembly, homooligomerizes. Interacts with FloT. Interacts with FtsH midcell. Interacts with PhoR, colocalizes with PhoR in FloA-only membrane rafts.

The protein localises to the cell membrane. Its subcellular location is the membrane raft. In terms of biological role, found in functional membrane microdomains (FMM) that may be equivalent to eukaryotic membrane rafts. FMMs are highly dynamic and increase in number as cells age. FloA and FloT function is partially redundant; double deletions have marked synthetic phenotypes. Flotillins are thought to be important factors in membrane fluidity, especially during periods of rapid growth in rich media. Whether specific proteins are associated with FMMs is controversial; in one study FloT rafts have been shown to include proteins involved in adaptation to stationary phase, while FloA-FloT rafts include proteins involved in differentiation including sporulation, biofilm formation and DNA uptake competence. Another (more finely resolved) study only showed association of NfeD2 with FloT rafts of all the proteins examined. Involved in spatial organization of membranes, perhaps recruiting proteins to specific membrane regions. Simultaneous overexpression of both FloA and FloT leads to defects in cell division and differentiation, in part caused by stabilization of FtsH and its subsequent increased ability to degrade proteins. Cells make more biofilm, are about half as long, have less EzrA and more frequent Z-rings. The chain is Flotillin-like protein FloA from Bacillus subtilis (strain 168).